The primary structure comprises 320 residues: Geranylgeranyl pyrophosphate synthase (320 aa).

Isopentenyl diphosphate-binding residues include lysine 35, arginine 38, and histidine 67. Residues aspartate 74 and aspartate 78 each contribute to the Mg(2+) site. Residue arginine 83 participates in dimethylallyl diphosphate binding. Arginine 84 is a binding site for isopentenyl diphosphate. Dimethylallyl diphosphate is bound by residues lysine 168, threonine 169, glutamine 206, lysine 223, and lysine 233.

Belongs to the FPP/GGPP synthase family. It depends on Mg(2+) as a cofactor.

It localises to the cytoplasm. The enzyme catalyses isopentenyl diphosphate + dimethylallyl diphosphate = (2E)-geranyl diphosphate + diphosphate. The catalysed reaction is isopentenyl diphosphate + (2E)-geranyl diphosphate = (2E,6E)-farnesyl diphosphate + diphosphate. It carries out the reaction isopentenyl diphosphate + (2E,6E)-farnesyl diphosphate = (2E,6E,10E)-geranylgeranyl diphosphate + diphosphate. The protein operates within isoprenoid biosynthesis; farnesyl diphosphate biosynthesis; farnesyl diphosphate from geranyl diphosphate and isopentenyl diphosphate: step 1/1. It functions in the pathway isoprenoid biosynthesis; geranyl diphosphate biosynthesis; geranyl diphosphate from dimethylallyl diphosphate and isopentenyl diphosphate: step 1/1. Its pathway is isoprenoid biosynthesis; geranylgeranyl diphosphate biosynthesis; geranylgeranyl diphosphate from farnesyl diphosphate and isopentenyl diphosphate: step 1/1. Functionally, catalyzes the trans-addition of the 3 molecules of IPP onto DMAPP to form geranylgeranyl pyrophosphate. May be involved in vesicle trafficking and protein sorting. In Eremothecium gossypii (strain ATCC 10895 / CBS 109.51 / FGSC 9923 / NRRL Y-1056) (Yeast), this protein is Geranylgeranyl pyrophosphate synthase (BTS1).